The primary structure comprises 484 residues: Chromosomal replication initiator protein DnaA (484 aa).

Residues 1 to 73 (MQEGKNIWSL…EILIEKGHNT (73 aa)) are domain I, interacts with DnaA modulators. The domain II stretch occupies residues 73–140 (TINVEFINSP…EEIHTKYRNP (68 aa)). The domain III, AAA+ region stretch occupies residues 141 to 357 (FLKKKYTFEN…AAVTKLKAHI (217 aa)). Positions 185, 187, 188, and 189 each coordinate ATP. A domain IV, binds dsDNA region spans residues 358-484 (DLEDIEIDTS…IELMNKINKK (127 aa)).

It belongs to the DnaA family. Oligomerizes as a right-handed, spiral filament on DNA at oriC.

The protein resides in the cytoplasm. In terms of biological role, plays an essential role in the initiation and regulation of chromosomal replication. ATP-DnaA binds to the origin of replication (oriC) to initiate formation of the DNA replication initiation complex once per cell cycle. Binds the DnaA box (a 9 base pair repeat at the origin) and separates the double-stranded (ds)DNA. Forms a right-handed helical filament on oriC DNA; dsDNA binds to the exterior of the filament while single-stranded (ss)DNA is stabiized in the filament's interior. The ATP-DnaA-oriC complex binds and stabilizes one strand of the AT-rich DNA unwinding element (DUE), permitting loading of DNA polymerase. After initiation quickly degrades to an ADP-DnaA complex that is not apt for DNA replication. Binds acidic phospholipids. This Borrelia hermsii (strain HS1 / DAH) protein is Chromosomal replication initiator protein DnaA.